The chain runs to 311 residues: Apulose-4-phosphate transketolase subunit B (311 aa).

It belongs to the transketolase family. As to quaternary structure, probable heterodimer composed of AptA and AptB. It depends on thiamine diphosphate as a cofactor.

It carries out the reaction apulose 4-phosphate + D-glyceraldehyde 3-phosphate = D-xylulose 5-phosphate + dihydroxyacetone phosphate. It participates in carbohydrate metabolism. In terms of biological role, involved in catabolism of D-apiose. Catalyzes the transfer of the glycolaldehyde group from apulose-4-phosphate to D-glyceraldehyde 3-phosphate, generating dihydroxyacetone phosphate and D-xylulose-5-phosphate. The chain is Apulose-4-phosphate transketolase subunit B from Actinobacillus succinogenes (strain ATCC 55618 / DSM 22257 / CCUG 43843 / 130Z).